Here is a 146-residue protein sequence, read N- to C-terminus: Protein ADM2 (146 aa).

The signal sequence occupies residues 1–25 (MAQLLMVTVTFGCISLLYLLPGTLS). The propeptide occupies 26 to 96 (GSLGKGLRPR…HPGPQRHVGS (71 aa)). The tract at residues 29–99 (GKGLRPREPP…PQRHVGSRRP (71 aa)) is disordered. Residues Cys108 and Cys113 are joined by a disulfide bond. The residue at position 145 (Tyr145) is a Tyrosine amide.

This sequence belongs to the adrenomedullin family. As to expression, expression was restricted to the intermediate and anterior lobes of the pituitary.

Its subcellular location is the secreted. Its function is as follows. Intermedin/ADM2 is a peptide hormone that plays a role as physiological regulator of gastrointestinal and cardiovascular bioactivities mediated by the CALCRL-RAMPs receptor complexes. Activates the cAMP-dependent pathway through interaction with CALCRL-RAMP3 receptor complex. This chain is Protein ADM2, found in Rattus norvegicus (Rat).